A 380-amino-acid chain; its full sequence is Cytochrome b (380 aa).

A run of 4 helical transmembrane segments spans residues 34–54 (FGSL…LLAT), 78–99 (WLIR…YLHI), 114–134 (WNTG…GYVL), and 179–199 (FFAL…IHLT). Positions 84 and 98 each coordinate heme b. Heme b contacts are provided by His-183 and His-197. Residue His-202 coordinates a ubiquinone. Helical transmembrane passes span 227-247 (LKDI…ALFS), 289-309 (LGGV…PFLH), 321-341 (ISQL…WVGS), and 348-368 (FIII…ILFP).

It belongs to the cytochrome b family. As to quaternary structure, the cytochrome bc1 complex contains 11 subunits: 3 respiratory subunits (MT-CYB, CYC1 and UQCRFS1), 2 core proteins (UQCRC1 and UQCRC2) and 6 low-molecular weight proteins (UQCRH/QCR6, UQCRB/QCR7, UQCRQ/QCR8, UQCR10/QCR9, UQCR11/QCR10 and a cleavage product of UQCRFS1). This cytochrome bc1 complex then forms a dimer. It depends on heme b as a cofactor.

The protein localises to the mitochondrion inner membrane. Component of the ubiquinol-cytochrome c reductase complex (complex III or cytochrome b-c1 complex) that is part of the mitochondrial respiratory chain. The b-c1 complex mediates electron transfer from ubiquinol to cytochrome c. Contributes to the generation of a proton gradient across the mitochondrial membrane that is then used for ATP synthesis. In Pelecanoides magellani (Magellanic diving petrel), this protein is Cytochrome b (MT-CYB).